The sequence spans 164 residues: UPF0304 protein YfbU (164 aa).

This sequence belongs to the UPF0304 family.

The protein is UPF0304 protein YfbU of Salmonella choleraesuis (strain SC-B67).